The sequence spans 192 residues: MLKKTVLGLTAGAMLLSAGSALAADYKIDKQGQHAFIEFRIQHLGYSWLYGTFKDFDGGFTFDEKDPSKDKVNVTINTASVDTNHAERDKHLRSAEFLNVEKNKQAKFESTEVKKNGEGYAVVGNLTLNGVTKPVTLDAKLIGQGNDPWGGYRAGFEANGKIKLKDFGITTDLGPASQDVELIISVEGVRAK.

The signal sequence occupies residues 1–23; the sequence is MLKKTVLGLTAGAMLLSAGSALA.

It belongs to the UPF0312 family. Type 1 subfamily.

It localises to the periplasm. This chain is UPF0312 protein Spro_1887, found in Serratia proteamaculans (strain 568).